Reading from the N-terminus, the 319-residue chain is Mitochondrial thiamine pyrophosphate carrier 1 (319 aa).

Solcar repeat units lie at residues 12 to 110 (GQRY…VTQS), 121 to 207 (PQPA…VRVP), and 214 to 309 (PFGS…VLKI). A run of 6 helical transmembrane segments spans residues 17-35 (VVAA…VAPL), 91-107 (LLYI…YRTV), 127-147 (FVSG…FDLL), 182-201 (GVSA…FATY), 221-237 (TAGV…VFPL), and 284-301 (GLTV…VTMW).

It belongs to the mitochondrial carrier (TC 2.A.29) family.

The protein resides in the mitochondrion inner membrane. Functionally, mitochondrial transporter that mediates uptake of thiamine pyrophosphate (ThPP) into mitochondria. This chain is Mitochondrial thiamine pyrophosphate carrier 1 (TPC1), found in Coccidioides immitis (strain RS) (Valley fever fungus).